Consider the following 268-residue polypeptide: 4-hydroxy-tetrahydrodipicolinate reductase (268 aa).

NAD(+)-binding positions include 10–15 (GSTGRM), E36, 99–101 (GTT), and 123–126 (APNM). Catalysis depends on H156, which acts as the Proton donor/acceptor. (S)-2,3,4,5-tetrahydrodipicolinate is bound at residue H157. Catalysis depends on K160, which acts as the Proton donor. 166–167 (GT) serves as a coordination point for (S)-2,3,4,5-tetrahydrodipicolinate.

It belongs to the DapB family.

The protein resides in the cytoplasm. It catalyses the reaction (S)-2,3,4,5-tetrahydrodipicolinate + NAD(+) + H2O = (2S,4S)-4-hydroxy-2,3,4,5-tetrahydrodipicolinate + NADH + H(+). It carries out the reaction (S)-2,3,4,5-tetrahydrodipicolinate + NADP(+) + H2O = (2S,4S)-4-hydroxy-2,3,4,5-tetrahydrodipicolinate + NADPH + H(+). Its pathway is amino-acid biosynthesis; L-lysine biosynthesis via DAP pathway; (S)-tetrahydrodipicolinate from L-aspartate: step 4/4. Catalyzes the conversion of 4-hydroxy-tetrahydrodipicolinate (HTPA) to tetrahydrodipicolinate. The polypeptide is 4-hydroxy-tetrahydrodipicolinate reductase (Nitrosomonas eutropha (strain DSM 101675 / C91 / Nm57)).